The following is a 159-amino-acid chain: F1845 fimbrial protein (159 aa).

Positions methionine 1 to alanine 21 are cleaved as a signal peptide.

Belongs to the Dr-adhesin family.

Its subcellular location is the fimbrium. In terms of biological role, hemagglutinins of uropathogenic E.coli mediate adherence to the upper urinary tract. These adhesins bind to the Dr blood group antigen and also agglutinate human erythrocytes in the presence of D-mannose (mannose-resistant hemagglutination (MRHA)). C1845 is a strain responsible for diarrheal disease. This chain is F1845 fimbrial protein (daaE), found in Escherichia coli.